We begin with the raw amino-acid sequence, 175 residues long: Large ribosomal subunit protein uL10 (175 aa).

It belongs to the universal ribosomal protein uL10 family. Part of the ribosomal stalk of the 50S ribosomal subunit. The N-terminus interacts with L11 and the large rRNA to form the base of the stalk. The C-terminus forms an elongated spine to which L12 dimers bind in a sequential fashion forming a multimeric L10(L12)X complex.

Forms part of the ribosomal stalk, playing a central role in the interaction of the ribosome with GTP-bound translation factors. The sequence is that of Large ribosomal subunit protein uL10 from Synechococcus elongatus (strain ATCC 33912 / PCC 7942 / FACHB-805) (Anacystis nidulans R2).